Reading from the N-terminus, the 546-residue chain is Chaperonin GroEL (546 aa).

ATP is bound by residues 29–32, Lys50, 86–90, Gly414, 477–479, and Asp493; these read TLGP, DGTTT, and NAL. Positions 522-546 are disordered; the sequence is KPEKDAPNPMAGMGGGGMGGMGGMM. Gly residues predominate over residues 533-546; that stretch reads GMGGGGMGGMGGMM.

Belongs to the chaperonin (HSP60) family. In terms of assembly, forms a cylinder of 14 subunits composed of two heptameric rings stacked back-to-back. Interacts with the co-chaperonin GroES.

Its subcellular location is the cytoplasm. It catalyses the reaction ATP + H2O + a folded polypeptide = ADP + phosphate + an unfolded polypeptide.. Together with its co-chaperonin GroES, plays an essential role in assisting protein folding. The GroEL-GroES system forms a nano-cage that allows encapsulation of the non-native substrate proteins and provides a physical environment optimized to promote and accelerate protein folding. The protein is Chaperonin GroEL of Leptospira borgpetersenii serovar Hardjo-bovis (strain JB197).